Here is a 466-residue protein sequence, read N- to C-terminus: Dihydrolipoyl dehydrogenase 3 (466 aa).

Residues 33 to 42 (EGRSTLGGTC), K51, and G115 each bind FAD. An intrachain disulfide couples C42 to C47. Residues 181–185 (GAGVI), E204, V238, and 271–274 (AIGR) contribute to the NAD(+) site. Positions 313 and 321 each coordinate FAD. The active-site Proton acceptor is H445.

This sequence belongs to the class-I pyridine nucleotide-disulfide oxidoreductase family. In terms of assembly, homodimer. FAD serves as cofactor.

The protein localises to the cytoplasm. It carries out the reaction N(6)-[(R)-dihydrolipoyl]-L-lysyl-[protein] + NAD(+) = N(6)-[(R)-lipoyl]-L-lysyl-[protein] + NADH + H(+). Functionally, LPD-3 may substitute for lipoamide dehydrogenase of the 2-oxoglutarate dehydrogenase and pyruvate multienzyme complexes when the latter is inactive or missing. This chain is Dihydrolipoyl dehydrogenase 3 (lpd3), found in Pseudomonas putida (Arthrobacter siderocapsulatus).